The chain runs to 243 residues: Ubiquinone biosynthesis O-methyltransferase (243 aa).

S-adenosyl-L-methionine contacts are provided by R44, G64, D85, and M129.

The protein belongs to the methyltransferase superfamily. UbiG/COQ3 family.

It catalyses the reaction a 3-demethylubiquinol + S-adenosyl-L-methionine = a ubiquinol + S-adenosyl-L-homocysteine + H(+). The enzyme catalyses a 3-(all-trans-polyprenyl)benzene-1,2-diol + S-adenosyl-L-methionine = a 2-methoxy-6-(all-trans-polyprenyl)phenol + S-adenosyl-L-homocysteine + H(+). It functions in the pathway cofactor biosynthesis; ubiquinone biosynthesis. In terms of biological role, O-methyltransferase that catalyzes the 2 O-methylation steps in the ubiquinone biosynthetic pathway. This chain is Ubiquinone biosynthesis O-methyltransferase, found in Cronobacter sakazakii (strain ATCC BAA-894) (Enterobacter sakazakii).